The sequence spans 209 residues: Protease (209 aa).

Catalysis depends on residues His55, Asp72, and Cys123.

The protein belongs to the peptidase C5 family. In terms of assembly, interacts with protease cofactor pVI-C; this interaction is necessary for protease activation.

Its subcellular location is the virion. The protein resides in the host nucleus. The enzyme catalyses Cleaves proteins of the adenovirus and its host cell at two consensus sites: -Yaa-Xaa-Gly-Gly-|-Xaa- and -Yaa-Xaa-Gly-Xaa-|-Gly- (in which Yaa is Met, Ile or Leu, and Xaa is any amino acid).. Its activity is regulated as follows. Requires DNA and protease cofactor for maximal activation. Inside nascent virions, becomes partially activated by binding to the viral DNA, allowing it to cleave the cofactor that binds to the protease and fully activates it. Actin, like the viral protease cofactor, seems to act as a cofactor in the cleavage of cytokeratin 18 and of actin itself. Functionally, cleaves viral precursor proteins (pTP, pIIIa, pVI, pVII, pVIII, and pX) inside newly assembled particles giving rise to mature virions. Protease complexed to its cofactor slides along the viral DNA to specifically locate and cleave the viral precursors. Mature virions have a weakened organization compared to the unmature virions, thereby facilitating subsequent uncoating. Without maturation, the particle lacks infectivity and is unable to uncoat. Late in adenovirus infection, in the cytoplasm, may participate in the cytoskeleton destruction. Cleaves host cell cytoskeletal keratins K7 and K18. The chain is Protease from Human adenovirus D serotype 17 (HAdV-17).